The chain runs to 226 residues: MRRIGLCISLLVTVLVMSACESEGEAQMFADCDQKTVKQTAAKPMSSKKKQDFQALASDRQLAIVFSSMIQVSEAFDYGIGNPEYFVRISMTEEEADIAKENLESIKLENKSLKKQNSEAVALLQKTRNQDMSRIEIQQLTENRAGFFETADSMIKLINQVTPKNAKKTRQQLDQLKKQYTQYSAESIKIMNSIVKKQKADKASFERHLEALLQKQPGQQVRSELY.

The N-terminal stretch at 1–18 (MRRIGLCISLLVTVLVMS) is a signal peptide.

This is an uncharacterized protein from Bacillus subtilis (strain 168).